The chain runs to 213 residues: Adenylate kinase (213 aa).

10–15 (GSGKGT) contributes to the ATP binding site. The NMP stretch occupies residues 30–59 (SVGDLLRNIISSESKLGKGIKDTVESGNLI). AMP is bound by residues Arg-36, 57–59 (NLI), 83–86 (GFPR), and Gln-90. The tract at residues 125-160 (DRLTCLDCKSIYSISSFKNTTCAKCKSTRLEKRIDD) is LID. Residue Arg-126 participates in ATP binding. Positions 129 and 132 each coordinate Zn(2+). 135–136 (IY) provides a ligand contact to ATP. The Zn(2+) site is built by Cys-146 and Cys-149. Residues Arg-157 and Arg-169 each contribute to the AMP site. Leu-195 contributes to the ATP binding site.

The protein belongs to the adenylate kinase family. In terms of assembly, monomer.

It localises to the cytoplasm. The enzyme catalyses AMP + ATP = 2 ADP. Its pathway is purine metabolism; AMP biosynthesis via salvage pathway; AMP from ADP: step 1/1. Its function is as follows. Catalyzes the reversible transfer of the terminal phosphate group between ATP and AMP. Plays an important role in cellular energy homeostasis and in adenine nucleotide metabolism. This is Adenylate kinase from Wolbachia pipientis subsp. Culex pipiens (strain wPip).